Consider the following 306-residue polypeptide: tRNA dimethylallyltransferase (306 aa).

13–20 (GPTGAGKT) is a binding site for ATP. 15–20 (TGAGKT) serves as a coordination point for substrate. Interaction with substrate tRNA regions lie at residues 38 to 41 (DSRQ) and 161 to 165 (QRNAR).

It belongs to the IPP transferase family. In terms of assembly, monomer. Mg(2+) is required as a cofactor.

It carries out the reaction adenosine(37) in tRNA + dimethylallyl diphosphate = N(6)-dimethylallyladenosine(37) in tRNA + diphosphate. Catalyzes the transfer of a dimethylallyl group onto the adenine at position 37 in tRNAs that read codons beginning with uridine, leading to the formation of N6-(dimethylallyl)adenosine (i(6)A). The protein is tRNA dimethylallyltransferase of Maridesulfovibrio salexigens (strain ATCC 14822 / DSM 2638 / NCIMB 8403 / VKM B-1763) (Desulfovibrio salexigens).